We begin with the raw amino-acid sequence, 137 residues long: Ribonuclease P protein component (137 aa).

Belongs to the RnpA family. In terms of assembly, consists of a catalytic RNA component (M1 or rnpB) and a protein subunit.

It carries out the reaction Endonucleolytic cleavage of RNA, removing 5'-extranucleotides from tRNA precursor.. Functionally, RNaseP catalyzes the removal of the 5'-leader sequence from pre-tRNA to produce the mature 5'-terminus. It can also cleave other RNA substrates such as 4.5S RNA. The protein component plays an auxiliary but essential role in vivo by binding to the 5'-leader sequence and broadening the substrate specificity of the ribozyme. This chain is Ribonuclease P protein component, found in Porphyromonas gingivalis (strain ATCC 33277 / DSM 20709 / CIP 103683 / JCM 12257 / NCTC 11834 / 2561).